The primary structure comprises 239 residues: tRNA pseudouridine synthase C (239 aa).

D54 is an active-site residue.

This sequence belongs to the pseudouridine synthase RluA family.

It carries out the reaction uridine(65) in tRNA = pseudouridine(65) in tRNA. In terms of biological role, responsible for synthesis of pseudouridine from uracil-65 in transfer RNAs. This Haemophilus influenzae (strain ATCC 51907 / DSM 11121 / KW20 / Rd) protein is tRNA pseudouridine synthase C (truC).